A 377-amino-acid chain; its full sequence is 1,3,6,8-tetrahydroxynaphthalene synthase (377 aa).

Cys-164 is an active-site residue.

It belongs to the thiolase-like superfamily. Chalcone/stilbene synthases family. In terms of assembly, homodimer.

The enzyme catalyses 5 malonyl-CoA + 5 H(+) = naphthalene-1,3,6,8-tetrol + 5 CO2 + 5 CoA + H2O. It functions in the pathway pigment biosynthesis; melanin biosynthesis. Involved in the biosynthesis of melanin but also various secondary metabolites containing a naphthoquinone ring. Catalyzes the iterative condensation of five CoA-linked malonyl units to form a pentaketide intermediate. THNS subsequently catalyzes the dual intramolecular Claisen and aldol condensations of this linear intermediate to produce the fused ring of 1,3,6,8-tetrahydroxynaphthalene (THN). The chain is 1,3,6,8-tetrahydroxynaphthalene synthase from Streptomyces peucetius subsp. caesius.